Consider the following 1013-residue polypeptide: Mediator of RNA polymerase II transcription subunit 5 (1013 aa).

The protein belongs to the Mediator complex subunit 5 family. Component of the Mediator complex.

Its subcellular location is the nucleus. In terms of biological role, component of the Mediator complex, a coactivator involved in the regulated transcription of nearly all RNA polymerase II-dependent genes. Mediator functions as a bridge to convey information from gene-specific regulatory proteins to the basal RNA polymerase II transcription machinery. Mediator is recruited to promoters by direct interactions with regulatory proteins and serves as a scaffold for the assembly of a functional preinitiation complex with RNA polymerase II and the general transcription factors. This chain is Mediator of RNA polymerase II transcription subunit 5 (NUT1), found in Aspergillus oryzae (strain ATCC 42149 / RIB 40) (Yellow koji mold).